Here is a 309-residue protein sequence, read N- to C-terminus: Carbamate kinase 2 (309 aa).

Belongs to the carbamate kinase family.

It is found in the cytoplasm. It carries out the reaction hydrogencarbonate + NH4(+) + ATP = carbamoyl phosphate + ADP + H2O + H(+). The protein operates within metabolic intermediate metabolism; carbamoyl phosphate degradation; CO(2) and NH(3) from carbamoyl phosphate: step 1/1. This is Carbamate kinase 2 (arcC2) from Staphylococcus epidermidis (strain ATCC 12228 / FDA PCI 1200).